A 215-amino-acid chain; its full sequence is 3-dehydroquinate dehydratase (215 aa).

Residues Ser6, Glu31 to Arg33, and Arg64 contribute to the 3-dehydroquinate site. His111 serves as the catalytic Proton donor/acceptor. Lys138 serves as the catalytic Schiff-base intermediate with substrate. 3 residues coordinate 3-dehydroquinate: Arg174, Thr193, and Gln197.

It belongs to the type-I 3-dehydroquinase family. Homodimer.

The enzyme catalyses 3-dehydroquinate = 3-dehydroshikimate + H2O. It functions in the pathway metabolic intermediate biosynthesis; chorismate biosynthesis; chorismate from D-erythrose 4-phosphate and phosphoenolpyruvate: step 3/7. Its function is as follows. Involved in the third step of the chorismate pathway, which leads to the biosynthesis of aromatic amino acids. Catalyzes the cis-dehydration of 3-dehydroquinate (DHQ) and introduces the first double bond of the aromatic ring to yield 3-dehydroshikimate. The chain is 3-dehydroquinate dehydratase from Ignicoccus hospitalis (strain KIN4/I / DSM 18386 / JCM 14125).